Reading from the N-terminus, the 353-residue chain is MDKYDVVKDLGAGNFGVARLLRHKDTKELVAMKYIERGRKIDENVAREIINHRSLKHPNIIRFKEVILTPTHLAIVMEYASGGELFDRICTAGRFSEAEARYFFQQLICGVDYCHSLQICHRDLKLENTLLDGSPAPLLKICDFGYSKSSILHSRPKSTVGTPAYIAPEVLSRREYDGKHADVWSCGVTLYVMLVGAYPFEDPNDPKNFRKTIQRIMAVQYKIPDYVHISQECKHLLSRIFVTNSAKRITLKEIKNHPWYLKNLPKELLESAQAAYYKRDTSFSLQSVEDIMKIVGEARNPAPSTSAVKSSGSGADEEEEEDVEAEVEEEEDDEDEYEKHVKEAQSCQESDKA.

The 257-residue stretch at 4–260 folds into the Protein kinase domain; it reads YDVVKDLGAG…LKEIKNHPWY (257 aa). Residues 10–18 and Lys-33 each bind ATP; that span reads LGAGNFGVA. Asp-123 serves as the catalytic Proton acceptor. The disordered stretch occupies residues 299 to 353; it reads RNPAPSTSAVKSSGSGADEEEEEDVEAEVEEEEDDEDEYEKHVKEAQSCQESDKA. The segment covering 302 to 313 has biased composition (polar residues); sequence APSTSAVKSSGS. Over residues 315–336 the composition is skewed to acidic residues; that stretch reads ADEEEEEDVEAEVEEEEDDEDE. Residues 337–353 show a composition bias toward basic and acidic residues; sequence YEKHVKEAQSCQESDKA.

Belongs to the protein kinase superfamily. Ser/Thr protein kinase family. As to expression, expressed in seedlings.

The protein localises to the nucleus. It carries out the reaction L-seryl-[protein] + ATP = O-phospho-L-seryl-[protein] + ADP + H(+). The catalysed reaction is L-threonyl-[protein] + ATP = O-phospho-L-threonyl-[protein] + ADP + H(+). The sequence is that of Serine/threonine-protein kinase SRK2G (SRK2G) from Arabidopsis thaliana (Mouse-ear cress).